Reading from the N-terminus, the 87-residue chain is Small cysteine-rich outer membrane protein omcA (87 aa).

The first 19 residues, 1 to 19 (MKKAVLLATVFCGVVGLTS), serve as a signal peptide directing secretion. The N-palmitoyl cysteine moiety is linked to residue Cys-20. Cys-20 is lipidated: S-diacylglycerol cysteine.

In terms of assembly, part of a disulfide cross-linked outer membrane complex (COMC) composed of the major outer membrane porin (MOMP), the small cysteine-rich protein (omcA) and the large cysteine-rich periplasmic protein (omcB). N-terminal amide-linked and S-diacylglycerol cysteine-linked to 16:0, 18:0, 15:0 branched, and 17:0 branched fatty acids (ratio 6:5:3:4) in the EB stage. The exact distribution of fatty acids has not been determined. Post-translationally, the N-terminus is blocked.

It is found in the cell outer membrane. In terms of biological role, in elementary bodies (EBs, the infectious stage, which is able to survive outside the host cell) provides the structural integrity of the outer envelope through disulfide cross-links with the large cysteine-rich periplasmic protein and the major outer membrane porin. It has been described in publications as the Sarkosyl-insoluble COMC (Chlamydia outer membrane complex), and serves as the functional equivalent of peptidoglycan. In Chlamydia psittaci (Chlamydophila psittaci), this protein is Small cysteine-rich outer membrane protein omcA (omcA).